Reading from the N-terminus, the 210-residue chain is tRNA (guanine-N(7)-)-methyltransferase (210 aa).

S-adenosyl-L-methionine is bound by residues glutamate 36, glutamate 61, aspartate 90, and aspartate 112. Residue aspartate 112 is part of the active site. Substrate contacts are provided by residues lysine 116, aspartate 148, and 188 to 191 (TEYE).

This sequence belongs to the class I-like SAM-binding methyltransferase superfamily. TrmB family.

It carries out the reaction guanosine(46) in tRNA + S-adenosyl-L-methionine = N(7)-methylguanosine(46) in tRNA + S-adenosyl-L-homocysteine. It functions in the pathway tRNA modification; N(7)-methylguanine-tRNA biosynthesis. Its function is as follows. Catalyzes the formation of N(7)-methylguanine at position 46 (m7G46) in tRNA. This Mycoplasma genitalium (strain ATCC 33530 / DSM 19775 / NCTC 10195 / G37) (Mycoplasmoides genitalium) protein is tRNA (guanine-N(7)-)-methyltransferase.